The primary structure comprises 474 residues: ATP synthase subunit beta (474 aa).

153-160 is a binding site for ATP; it reads GGAGVGKT.

Belongs to the ATPase alpha/beta chains family. In terms of assembly, F-type ATPases have 2 components, CF(1) - the catalytic core - and CF(0) - the membrane proton channel. CF(1) has five subunits: alpha(3), beta(3), gamma(1), delta(1), epsilon(1). CF(0) has three main subunits: a(1), b(2) and c(9-12). The alpha and beta chains form an alternating ring which encloses part of the gamma chain. CF(1) is attached to CF(0) by a central stalk formed by the gamma and epsilon chains, while a peripheral stalk is formed by the delta and b chains.

The protein resides in the cell inner membrane. The catalysed reaction is ATP + H2O + 4 H(+)(in) = ADP + phosphate + 5 H(+)(out). Produces ATP from ADP in the presence of a proton gradient across the membrane. The catalytic sites are hosted primarily by the beta subunits. The polypeptide is ATP synthase subunit beta (Neorickettsia sennetsu (strain ATCC VR-367 / Miyayama) (Ehrlichia sennetsu)).